A 2434-amino-acid chain; its full sequence is Protein Ycf2 (2434 aa).

1693 to 1700 (GPTETGRS) serves as a coordination point for ATP.

Belongs to the Ycf2 family.

It localises to the plastid. Its subcellular location is the chloroplast stroma. Probable ATPase of unknown function. Its presence in a non-photosynthetic plant (Epifagus virginiana) and experiments in tobacco indicate that it has an essential function which is probably not related to photosynthesis. The polypeptide is Protein Ycf2 (Cycas taitungensis (Prince sago)).